A 314-amino-acid chain; its full sequence is Oxaloacetate tautomerase FAHD2A, mitochondrial (314 aa).

Residues 1 to 84 (MLVSGRRRLL…ATLSVARRAL (84 aa)) constitute a mitochondrion transit peptide. Mg(2+) contacts are provided by Glu-159, Glu-161, and Asp-190.

This sequence belongs to the FAH family. Requires Mg(2+) as cofactor. Mn(2+) serves as cofactor.

It is found in the mitochondrion. It catalyses the reaction oxaloacetate = enol-oxaloacetate. Functionally, tautomerase that converts enol-oxaloacetate, a strong inhibitor of succinate dehydrogenase, to the physiological keto form of oxaloacetate. It is thereby required to maximize aerobic respiration efficiency by preventing succinate dehydrogenase inhibition. The protein is Oxaloacetate tautomerase FAHD2A, mitochondrial of Homo sapiens (Human).